The sequence spans 467 residues: Transcriptional modulator WTM2 (467 aa).

Positions 1-12 (MAKSKSSQGASG) are enriched in low complexity. Disordered regions lie at residues 1-22 (MAKSKSSQGASGARRKPAPSLY) and 84-121 (TFYDDDDDDDNDDDDEEGNGKTKSAATPNPEYGDAFQD). The span at 87 to 100 (DDDDDDDNDDDDEE) shows a compositional bias: acidic residues. WD repeat units lie at residues 244–282 (PGTNVAHSVRFFNNHLFASCSDDNILRFWDTRTADKPLW), 287–327 (PKNG…LATT), and 349–389 (SGGD…SRND).

In terms of biological role, transcriptional modulator with roles in meiotic regulation and silencing. In Saccharomyces cerevisiae (strain ATCC 204508 / S288c) (Baker's yeast), this protein is Transcriptional modulator WTM2 (WTM2).